A 105-amino-acid chain; its full sequence is Iron-sulfur cluster assembly protein CyaY (105 aa).

Belongs to the frataxin family.

Involved in iron-sulfur (Fe-S) cluster assembly. May act as a regulator of Fe-S biogenesis. This Paraburkholderia phymatum (strain DSM 17167 / CIP 108236 / LMG 21445 / STM815) (Burkholderia phymatum) protein is Iron-sulfur cluster assembly protein CyaY.